The following is a 441-amino-acid chain: Coiled-coil domain-containing protein 91 (441 aa).

The tract at residues 1 to 16 (MDDDDFGGFEAAETFD) is GGA1-binding motif. Positions 1 to 26 (MDDDDFGGFEAAETFDGGSGETQTTS) are disordered. 2 positions are modified to phosphoserine: serine 43 and serine 46. Coiled coils occupy residues 130–209 (SNIQ…GHEA) and 249–407 (ELLN…KRLD). A homodimerization region spans residues 210 to 413 (LSIIVDEYKA…KRLDQVIRQR (204 aa)).

As to quaternary structure, homodimer. Interacts with GGA1, GGA2 and AP1G1. In terms of tissue distribution, widely expressed.

The protein resides in the membrane. It is found in the golgi apparatus. Its subcellular location is the trans-Golgi network membrane. The protein localises to the trans-Golgi network. In terms of biological role, involved in the regulation of membrane traffic through the trans-Golgi network (TGN). Functions in close cooperation with the GGAs in the sorting of hydrolases to lysosomes. This Homo sapiens (Human) protein is Coiled-coil domain-containing protein 91 (CCDC91).